Reading from the N-terminus, the 493-residue chain is Putative glycerol-3-phosphate transporter 5 (493 aa).

12 helical membrane passes run 25–44 (FTFH…ASFH), 83–103 (LGEL…FAGH), 113–133 (FLVF…LGYW), 145–165 (VQIV…SVVG), 185–205 (SVGN…GWGW), 207–227 (FVLP…FLVV), 292–312 (FCLF…PYYL), 328–348 (GILS…AGFI), 352–372 (IKAR…ALIM), 375–395 (VYGS…GLLV), 428–448 (AIID…AGYI), and 452–472 (GWNS…LFLV).

This sequence belongs to the major facilitator superfamily. Organophosphate:Pi antiporter (OPA) (TC 2.A.1.4) family.

The protein resides in the membrane. The polypeptide is Putative glycerol-3-phosphate transporter 5 (Arabidopsis thaliana (Mouse-ear cress)).